Here is a 178-residue protein sequence, read N- to C-terminus: Peptide deformylase (178 aa).

Cysteine 102 and histidine 144 together coordinate Fe cation. Residue glutamate 145 is part of the active site. Histidine 148 serves as a coordination point for Fe cation.

Belongs to the polypeptide deformylase family. Fe(2+) is required as a cofactor.

It catalyses the reaction N-terminal N-formyl-L-methionyl-[peptide] + H2O = N-terminal L-methionyl-[peptide] + formate. Functionally, removes the formyl group from the N-terminal Met of newly synthesized proteins. Requires at least a dipeptide for an efficient rate of reaction. N-terminal L-methionine is a prerequisite for activity but the enzyme has broad specificity at other positions. In Leptospira borgpetersenii serovar Hardjo-bovis (strain JB197), this protein is Peptide deformylase.